The chain runs to 214 residues: uncharacterized protein (214 aa).

A signal peptide spans 1-17 (MWCFIVFLTIFLPTLEG). 2 N-linked (GlcNAc...) asparagine glycosylation sites follow: asparagine 88 and asparagine 139.

Component of the acid-insoluble organic matrix of calcified layers of the shell (at protein level).

It is found in the secreted. This is an uncharacterized protein from Lottia gigantea (Giant owl limpet).